The following is a 381-amino-acid chain: MNAPQKHSAPITVEVALGDRAYEIVIGRDVIASLGERIAKLRPGARTAIVTDRTVAKTWLKRTEEVLDQAGIAHASVIVGEGESSKSYAGLEQVCEALIAAKIERNDLVIALGGGVIGDLAGFSASLLRRGVDFVQVPTSLLAQVDSSVGGKTGINSPQGKNLIGTFHQPVLVLADTAILDTLSPRQFRAGYAEVAKYGALGDEAFFAWLEANHAELFSGGAAREHAVATSCRAKAAIVARDERETGDRALLNLGHTFGHALEAATGFSDRLFHGEGVAIGMVLAAEFSAERGMMPATDAERLAKHLAEVGLPTRLQDIAGFTQEGLADADRLMALMAQDKKVKRGELTFILMEGIGRAVIASKVEPAPVRDFLQRKLAQA.

Residues 81-86 (EGESSK), 115-119 (GVIGD), 139-140 (TS), Lys-152, and Lys-161 each bind NAD(+). Residues Glu-194, His-256, and His-274 each contribute to the Zn(2+) site.

The protein belongs to the sugar phosphate cyclases superfamily. Dehydroquinate synthase family. The cofactor is Co(2+). Zn(2+) is required as a cofactor. NAD(+) serves as cofactor.

Its subcellular location is the cytoplasm. The enzyme catalyses 7-phospho-2-dehydro-3-deoxy-D-arabino-heptonate = 3-dehydroquinate + phosphate. Its pathway is metabolic intermediate biosynthesis; chorismate biosynthesis; chorismate from D-erythrose 4-phosphate and phosphoenolpyruvate: step 2/7. Catalyzes the conversion of 3-deoxy-D-arabino-heptulosonate 7-phosphate (DAHP) to dehydroquinate (DHQ). This is 3-dehydroquinate synthase from Rhodopseudomonas palustris (strain ATCC BAA-98 / CGA009).